The sequence spans 190 residues: Small ribosomal subunit protein eS7B (190 aa).

At S2 the chain carries N-acetylserine. S10 and S31 each carry phosphoserine. Glycyl lysine isopeptide (Lys-Gly) (interchain with G-Cter in ubiquitin) cross-links involve residues K83 and K84.

This sequence belongs to the eukaryotic ribosomal protein eS7 family. As to quaternary structure, component of the small ribosomal subunit (SSU). Mature yeast ribosomes consist of a small (40S) and a large (60S) subunit. The 40S small subunit contains 1 molecule of ribosomal RNA (18S rRNA) and 33 different proteins (encoded by 57 genes). The large 60S subunit contains 3 rRNA molecules (25S, 5.8S and 5S rRNA) and 46 different proteins (encoded by 81 genes). Interacts with snoRNA U3. uS11 interacts with MPP10. Component of the ribosomal small subunit (SSU) processome composed of at least 40 protein subunits and snoRNA U3. N-terminally acetylated by acetyltransferase NatA. Post-translationally, ubiquitinated at Lys-83 and Lys-84 in response to stalled ribosomes, leading to activation of the No-Go Decay (NGD) pathway: first monoubiquitinated by MOT2/NOT4, followed by formation by HEL2 of 'Lys-63'-linked polyubiquitin chains on monoubiquitin.

Its subcellular location is the cytoplasm. It localises to the nucleus. It is found in the nucleolus. In terms of biological role, component of the ribosome, a large ribonucleoprotein complex responsible for the synthesis of proteins in the cell. The small ribosomal subunit (SSU) binds messenger RNAs (mRNAs) and translates the encoded message by selecting cognate aminoacyl-transfer RNA (tRNA) molecules. The large subunit (LSU) contains the ribosomal catalytic site termed the peptidyl transferase center (PTC), which catalyzes the formation of peptide bonds, thereby polymerizing the amino acids delivered by tRNAs into a polypeptide chain. The nascent polypeptides leave the ribosome through a tunnel in the LSU and interact with protein factors that function in enzymatic processing, targeting, and the membrane insertion of nascent chains at the exit of the ribosomal tunnel. eS7 is involved in nucleolar processing of pre-18S ribosomal RNA and ribosome assembly. This chain is Small ribosomal subunit protein eS7B, found in Saccharomyces cerevisiae (strain ATCC 204508 / S288c) (Baker's yeast).